A 503-amino-acid chain; its full sequence is ATP synthase subunit alpha (503 aa).

170 to 177 (GDRATGKT) contributes to the ATP binding site.

It belongs to the ATPase alpha/beta chains family. F-type ATPases have 2 components, CF(1) - the catalytic core - and CF(0) - the membrane proton channel. CF(1) has five subunits: alpha(3), beta(3), gamma(1), delta(1), epsilon(1). CF(0) has three main subunits: a(1), b(2) and c(9-12). The alpha and beta chains form an alternating ring which encloses part of the gamma chain. CF(1) is attached to CF(0) by a central stalk formed by the gamma and epsilon chains, while a peripheral stalk is formed by the delta and b chains.

The protein resides in the cell inner membrane. The catalysed reaction is ATP + H2O + 4 H(+)(in) = ADP + phosphate + 5 H(+)(out). Produces ATP from ADP in the presence of a proton gradient across the membrane. The alpha chain is a regulatory subunit. This chain is ATP synthase subunit alpha, found in Aquifex aeolicus (strain VF5).